The chain runs to 238 residues: Endothelin-3 (238 aa).

An N-terminal signal peptide occupies residues Met1 to Ala16. A propeptide spanning residues Ala17 to Ser94 is cleaved from the precursor. Positions Gln24 to Pro89 are disordered. Disulfide bonds link Cys97-Cys111 and Cys99-Cys107. Positions Ile118–Pro238 are excised as a propeptide. The tract at residues Cys159 to Cys173 is endothelin-like. A disordered region spans residues Ser183 to Ser219. The segment covering Thr185–His212 has biased composition (basic and acidic residues).

It belongs to the endothelin/sarafotoxin family. Expressed in trophoblasts and placental stem villi vessels, but not in cultured placental smooth muscle cells.

It is found in the secreted. In terms of biological role, endothelins are endothelium-derived vasoconstrictor peptides. The polypeptide is Endothelin-3 (EDN3) (Homo sapiens (Human)).